Reading from the N-terminus, the 217-residue chain is Thymidylate kinase (217 aa).

ATP is bound at residue 7 to 14; sequence GIDGAGKS.

It belongs to the thymidylate kinase family.

It catalyses the reaction dTMP + ATP = dTDP + ADP. Phosphorylation of dTMP to form dTDP in both de novo and salvage pathways of dTTP synthesis. The chain is Thymidylate kinase from Chlorobaculum parvum (strain DSM 263 / NCIMB 8327) (Chlorobium vibrioforme subsp. thiosulfatophilum).